The chain runs to 295 residues: MDRIALMNAPGTDWSAWPAPAKLNLFLQITGRRADGYHLLQTVFRLLDWGDTIHLRVRSDGQILRIGESLPGVAEDDDLVIRAARLLQSAAGAAAGAEIRVDKRIPAGGGFGGGSSDAATVLVALNALWGLALTADTLAELGLQLGADVPVFVRGRNAWAEGVGEQLTPIALPEAAYLLVDPGVHVPTPVLFRSQELTRDAAPAKITDFASGSLLDNAFEPVLRRREPAVEAVFQALSRVGTPRLTGSGSGCFVEFATRAAAEQALAQLPGSLRAWVVEGAAHSPLLDARDAMKV.

Residue Lys-22 is part of the active site. Residue 106–116 coordinates ATP; it reads PAGGGFGGGSS. Residue Asp-148 is part of the active site.

Belongs to the GHMP kinase family. IspE subfamily.

The catalysed reaction is 4-CDP-2-C-methyl-D-erythritol + ATP = 4-CDP-2-C-methyl-D-erythritol 2-phosphate + ADP + H(+). It participates in isoprenoid biosynthesis; isopentenyl diphosphate biosynthesis via DXP pathway; isopentenyl diphosphate from 1-deoxy-D-xylulose 5-phosphate: step 3/6. Functionally, catalyzes the phosphorylation of the position 2 hydroxy group of 4-diphosphocytidyl-2C-methyl-D-erythritol. The chain is 4-diphosphocytidyl-2-C-methyl-D-erythritol kinase from Xanthomonas oryzae pv. oryzae (strain MAFF 311018).